The following is an 86-amino-acid chain: Putative defensin-like protein 234 (86 aa).

The first 26 residues, 1–26 (MRSATLLLVSCVLLSFILGNVKEVEA), serve as a signal peptide directing secretion. 4 cysteine pairs are disulfide-bonded: C34-C86, C44-C71, C52-C80, and C69-C82.

It belongs to the DEFL family.

The protein localises to the secreted. This chain is Putative defensin-like protein 234 (SCRL14), found in Arabidopsis thaliana (Mouse-ear cress).